The following is a 190-amino-acid chain: Membrane protein FAM174A (190 aa).

The N-terminal stretch at 1 to 29 is a signal peptide; that stretch reads MPTRRGCSGPCHFLASAFVLLLLPALNQS. N27 and N83 each carry an N-linked (GlcNAc...) asparagine glycan. Over 30–123 the chain is Extracellular; sequence VVLPSTVPRA…NPSDKPMTQR (94 aa). The segment at 37-119 is disordered; the sequence is PRAVQESKPL…AVSPNPSDKP (83 aa). Residues 124-144 traverse the membrane as a helical segment; that stretch reads ALTVLVVVSAAVLVYFVVRTV. Over 145–190 the chain is Cytoplasmic; the sequence is RMRRRNRKTRRYGVLDTNIENMELTPLEQDDEDDDNTLFDANHPRR. Residues 168–190 form a disordered region; the sequence is LTPLEQDDEDDDNTLFDANHPRR. Residues 172-181 are compositionally biased toward acidic residues; sequence EQDDEDDDNT.

This sequence belongs to the FAM174 family.

It is found in the membrane. The protein is Membrane protein FAM174A (Fam174a) of Rattus norvegicus (Rat).